A 243-amino-acid chain; its full sequence is 3-deoxy-manno-octulosonate cytidylyltransferase (243 aa).

The protein belongs to the KdsB family.

Its subcellular location is the cytoplasm. The enzyme catalyses 3-deoxy-alpha-D-manno-oct-2-ulosonate + CTP = CMP-3-deoxy-beta-D-manno-octulosonate + diphosphate. It participates in nucleotide-sugar biosynthesis; CMP-3-deoxy-D-manno-octulosonate biosynthesis; CMP-3-deoxy-D-manno-octulosonate from 3-deoxy-D-manno-octulosonate and CTP: step 1/1. Its pathway is bacterial outer membrane biogenesis; lipopolysaccharide biosynthesis. Activates KDO (a required 8-carbon sugar) for incorporation into bacterial lipopolysaccharide in Gram-negative bacteria. The protein is 3-deoxy-manno-octulosonate cytidylyltransferase of Helicobacter pylori (strain G27).